The sequence spans 376 residues: ATP phosphoribosyltransferase regulatory subunit (376 aa).

It belongs to the class-II aminoacyl-tRNA synthetase family. HisZ subfamily. In terms of assembly, heteromultimer composed of HisG and HisZ subunits.

The protein resides in the cytoplasm. It functions in the pathway amino-acid biosynthesis; L-histidine biosynthesis; L-histidine from 5-phospho-alpha-D-ribose 1-diphosphate: step 1/9. Its function is as follows. Required for the first step of histidine biosynthesis. May allow the feedback regulation of ATP phosphoribosyltransferase activity by histidine. The sequence is that of ATP phosphoribosyltransferase regulatory subunit from Brucella ovis (strain ATCC 25840 / 63/290 / NCTC 10512).